The primary structure comprises 81 residues: Acyl carrier protein (81 aa).

Residues 1–79 (MDREEILQKI…EAVDYVVEHQ (79 aa)) enclose the Carrier domain. Residue serine 39 is modified to O-(pantetheine 4'-phosphoryl)serine.

Belongs to the acyl carrier protein (ACP) family. 4'-phosphopantetheine is transferred from CoA to a specific serine of apo-ACP by AcpS. This modification is essential for activity because fatty acids are bound in thioester linkage to the sulfhydryl of the prosthetic group.

The protein localises to the cytoplasm. It participates in lipid metabolism; fatty acid biosynthesis. Carrier of the growing fatty acid chain in fatty acid biosynthesis. The sequence is that of Acyl carrier protein from Rubrobacter xylanophilus (strain DSM 9941 / JCM 11954 / NBRC 16129 / PRD-1).